The primary structure comprises 129 residues: Ribosome-binding factor A (129 aa).

It belongs to the RbfA family. Monomer. Binds 30S ribosomal subunits, but not 50S ribosomal subunits or 70S ribosomes.

Its subcellular location is the cytoplasm. Functionally, one of several proteins that assist in the late maturation steps of the functional core of the 30S ribosomal subunit. Associates with free 30S ribosomal subunits (but not with 30S subunits that are part of 70S ribosomes or polysomes). Required for efficient processing of 16S rRNA. May interact with the 5'-terminal helix region of 16S rRNA. The chain is Ribosome-binding factor A from Pseudomonas aeruginosa (strain UCBPP-PA14).